A 496-amino-acid chain; its full sequence is Polyphosphate:AMP phosphotransferase (496 aa).

PPK2 stretches follow at residues 11-234 (IDKD…LQAA) and 269-495 (LDKD…YKKD).

The protein belongs to the polyphosphate kinase 2 (PPK2) family. Class II subfamily. As to quaternary structure, homodimer. The cofactor is Mg(2+).

It carries out the reaction [phosphate](n) + ADP = [phosphate](n+1) + AMP. Its function is as follows. Uses inorganic polyphosphate (polyP) as a donor to convert AMP to ADP. Can also convert GMP to GDP, with lower efficiency. Cannot dephosphorylate ADP in the presence of polyP. In Pseudomonas aeruginosa (strain ATCC 15692 / DSM 22644 / CIP 104116 / JCM 14847 / LMG 12228 / 1C / PRS 101 / PAO1), this protein is Polyphosphate:AMP phosphotransferase.